The following is a 937-amino-acid chain: Hyphally-regulated protein (937 aa).

An N-terminal signal peptide occupies residues 1–20 (MKVVSNFIFTILLTLNLSAA). N-linked (GlcNAc...) asparagine glycosylation occurs at N16. A helical membrane pass occupies residues 42-62 (VHSGATWAILGTTLCSFFGGL). N236 carries N-linked (GlcNAc...) asparagine glycosylation. A disordered region spans residues 332–483 (SAPESESDLN…QSITSSPGQS (152 aa)). Low complexity predominate over residues 344–392 (TTSSIETSSYSSAATESSVVSESSSAVDSLTSSSLSSKSESSDVVSSTT). Positions 393–414 (NIESSSTAIETTMNSESSTDAG) are enriched in polar residues. A compositionally biased stretch (low complexity) spans 415 to 475 (SSSISQSESS…SNALSSTEQS (61 aa)). N449, N488, N580, N585, N595, and N603 each carry an N-linked (GlcNAc...) asparagine glycan. Over residues 567–590 (DATTTTTTSTGGDNSTGGNESGSN) the composition is skewed to low complexity. The segment at 567–857 (DATTTTTTST…VANPVTTSTE (291 aa)) is disordered. Over residues 591–609 (HGPGNGSTEGSGNGSGAGS) the composition is skewed to gly residues. Residues 610–613 (NEGS) form repeat 1. The interval 610-753 (NEGSQSGPNN…GAGNGSNEGS (144 aa)) is 7 X 4 AA repeats of N-E-G-S. Residues N619, N631, N641, and N649 are each glycosylated (N-linked (GlcNAc...) asparagine). Gly residues-rich tracts occupy residues 619 to 631 (NGSG…GSNN) and 641 to 665 (NGSG…GSGS). 4 consecutive repeat copies span residues 666–669 (NEGS), 680–683 (NEGS), 690–693 (NEGS), and 698–701 (NEGS). Residues 666–682 (NEGSQSGSGSQPGPNEG) show a composition bias toward low complexity. Gly residues predominate over residues 699 to 725 (EGSGSGSGSGSNNGSGSGSQSGSGSGS). N-linked (GlcNAc...) asparagine glycosylation occurs at N711. Over residues 726 to 742 (QSGSESGSNSGSNEGSN) the composition is skewed to low complexity. The stretch at 738 to 741 (NEGS) is repeat 6. Over residues 743 to 801 (PGAGNGSNEGSGQGSGNGSEAGSGQGSGPNNGSGSGHNDGSGSGSNQGSNPGAGSGSGS) the composition is skewed to gly residues. The N-linked (GlcNAc...) asparagine glycan is linked to N747. Repeat 7 spans residues 750-753 (NEGS). Residues N759 and N773 are each glycosylated (N-linked (GlcNAc...) asparagine). A compositionally biased stretch (low complexity) spans 802-814 (ESGSKAGSHSGSN). Positions 817 to 829 (AKTDSIEGFHTES) are enriched in basic and acidic residues. Positions 841–851 (ATVTGNSVANP) are enriched in polar residues. Residues N897 and N913 are each glycosylated (N-linked (GlcNAc...) asparagine). N913 carries the GPI-anchor amidated asparagine lipid modification. Residues 914–937 (GSSIVTGGKSILFGLIVSMVVLFM) constitute a propeptide, removed in mature form.

It localises to the cell membrane. Its subcellular location is the secreted. The protein localises to the cell wall. Nonessential component of the hyphal cell wall. The protein is Hyphally-regulated protein (HYR1) of Candida albicans (Yeast).